Consider the following 707-residue polypeptide: GDNF-inducible zinc finger protein 1 (707 aa).

In terms of domain architecture, BTB spans 31–103 (CDVTVIVDYQ…VYTARVRVKE (73 aa)). Positions 149 to 165 (VEASSGPQVSVTPSSKA) are enriched in polar residues. Disordered regions lie at residues 149 to 221 (VEAS…PKIR) and 243 to 309 (RRLR…KDGE). Basic and acidic residues-rich tracts occupy residues 198–213 (PSKKCKEKLDKKKDVA), 243–278 (RRLREQQKSAEEAAKNDKCPQDQSPDNERVEAEPAS), and 287–298 (VEREESLQKVEG). C2H2-type zinc fingers lie at residues 316 to 338 (FQCTVCDKAFLYEKSFLKHIKYH), 347 to 370 (YRCDTCGQTFANRCNLKSHQRHVH), 376 to 399 (FPCEMCAKKFKRKKDVKRHVLQVH), 406 to 428 (HRCGQCGKGLSSKTALRLHERTH), 434 to 456 (YGCTKCDAKFSQPSALKTHLRVH), 462 to 484 (FVCDECGARFTQNHMLIYHKRCH), 490 to 512 (FMCETCGKSFASKEYLKHHNRIH), 518 to 540 (FKCEVCLRTFAQRNSLYQHIKVH), 546 to 568 (YCCDQCGKQFTQVNALQRHHRIH), and 574 to 596 (YMCNACGRTFTDKSTLRRHTSIH). Residue S612 is modified to Phosphoserine.

Belongs to the krueppel C2H2-type zinc-finger protein family. Interacts with NCL.

The protein localises to the cytoplasm. The protein resides in the nucleus. It is found in the nucleoplasm. It localises to the nucleolus. Transcriptional repressor that binds the GZF1 responsive element (GRE) (consensus: 5'-TGCGCN[TG][CA]TATA-3'). May be regulating VSX2/HOX10 expression. This chain is GDNF-inducible zinc finger protein 1 (Gzf1), found in Rattus norvegicus (Rat).